Consider the following 266-residue polypeptide: Glucosamine-6-phosphate deaminase 1 (266 aa).

Catalysis depends on D67, which acts as the Proton acceptor; for enolization step. N136 (for ring-opening step) is an active-site residue. H138 (proton acceptor; for ring-opening step) is an active-site residue. The active-site For ring-opening step is the E143.

This sequence belongs to the glucosamine/galactosamine-6-phosphate isomerase family. As to quaternary structure, homohexamer.

The protein localises to the cytoplasm. The enzyme catalyses alpha-D-glucosamine 6-phosphate + H2O = beta-D-fructose 6-phosphate + NH4(+). Functionally, catalyzes the reversible conversion of alpha-D-glucosamine 6-phosphate (GlcN-6P) into beta-D-fructose 6-phosphate (Fru-6P) and ammonium ion, a regulatory reaction step in de novo uridine diphosphate-N-acetyl-alpha-D-glucosamine (UDP-GlcNAc) biosynthesis via hexosamine pathway. This chain is Glucosamine-6-phosphate deaminase 1 (GPI1), found in Giardia intestinalis (Giardia lamblia).